We begin with the raw amino-acid sequence, 423 residues long: Probable sucrose-phosphatase 1 (423 aa).

Belongs to the sucrose phosphatase family. Homodimer. The cofactor is Mg(2+).

It catalyses the reaction sucrose 6(F)-phosphate + H2O = sucrose + phosphate. Its pathway is glycan biosynthesis; sucrose biosynthesis; sucrose from D-fructose 6-phosphate and UDP-alpha-D-glucose: step 2/2. Its function is as follows. Catalyzes the final step of sucrose synthesis. The chain is Probable sucrose-phosphatase 1 (SPP1) from Arabidopsis thaliana (Mouse-ear cress).